A 305-amino-acid polypeptide reads, in one-letter code: Peroxisome assembly protein 26 (305 aa).

Positions Met1 to Arg20 are disordered. Residues Met1–His246 lie on the Cytoplasmic side of the membrane. Residues Phe247–Val267 traverse the membrane as a helical; Signal-anchor for type II membrane protein segment. The Peroxisomal matrix portion of the chain corresponds to Arg268–Asp305.

This sequence belongs to the peroxin-26 family. In terms of assembly, interacts (via its cytoplasmic domain) with PEX6; interaction is direct and is ATP-dependent. Interacts with PEX1; interaction is indirect and is mediated via interaction with PEX6. In terms of tissue distribution, widely expressed. Highly expressed in kidney, liver, brain and skeletal muscles. Expressed at intermediate level in pancreas, placenta and heart. Weakly expressed in lung.

Its subcellular location is the peroxisome membrane. Peroxisomal docking factor that anchors PEX1 and PEX6 to peroxisome membranes. PEX26 is therefore required for the formation of the PEX1-PEX6 AAA ATPase complex, a complex that mediates the extraction of the PEX5 receptor from peroxisomal membrane. The chain is Peroxisome assembly protein 26 from Homo sapiens (Human).